A 348-amino-acid polypeptide reads, in one-letter code: 4-hydroxy-3-methylbut-2-en-1-yl diphosphate synthase (flavodoxin) (348 aa).

[4Fe-4S] cluster contacts are provided by C263, C266, C298, and E305.

The protein belongs to the IspG family. Requires [4Fe-4S] cluster as cofactor.

It carries out the reaction (2E)-4-hydroxy-3-methylbut-2-enyl diphosphate + oxidized [flavodoxin] + H2O + 2 H(+) = 2-C-methyl-D-erythritol 2,4-cyclic diphosphate + reduced [flavodoxin]. The protein operates within isoprenoid biosynthesis; isopentenyl diphosphate biosynthesis via DXP pathway; isopentenyl diphosphate from 1-deoxy-D-xylulose 5-phosphate: step 5/6. Its function is as follows. Converts 2C-methyl-D-erythritol 2,4-cyclodiphosphate (ME-2,4cPP) into 1-hydroxy-2-methyl-2-(E)-butenyl 4-diphosphate. The protein is 4-hydroxy-3-methylbut-2-en-1-yl diphosphate synthase (flavodoxin) of Dehalococcoides mccartyi (strain CBDB1).